The following is a 259-amino-acid chain: Protein POLYCHOME (259 aa).

The tract at residues 236–259 (KMKSTPSAKRAEREKRVRTLMSMR) is disordered.

In terms of assembly, interacts with APC/C activators such as APC5, FZR2, FZR3, CDC20.1 and CDC20.5. Expressed mainly in actively dividing cells (e.g. central cylinder of the root tip, young leaves and vascular tissues).

It localises to the nucleus. Negative regulator of the anaphase-promoting complex/cyclosome (APC/C) ubiquitin ligase required for proper mitotic progression and cell fate determination; inhibits premature cell differentiation. Prevents DNA endoreplication by promoting the maintenance of the mitotic state by preferentially inhibiting APC/C(FZR) and triggering cyclins accumulation (e.g. CYCB1-1, CYCB1-2 and CYCA2-3) in a temporal manner. Required for megagametophyte and endosperm development. Counteracts the activity of CCS52A1 thus inhibiting the turnover of CYCA2-3. Confers immunity to bacterial pathogens (e.g. Pseudomonas syringae pv. tomato DC3000), which is associated with increased expression of disease resistance (R) genes. The protein is Protein POLYCHOME (PYM) of Arabidopsis thaliana (Mouse-ear cress).